A 382-amino-acid polypeptide reads, in one-letter code: 3-hydroxyisobutyryl-CoA hydrolase, mitochondrial (382 aa).

Glu117, Gly142, Glu165, and Asp173 together coordinate substrate.

This sequence belongs to the enoyl-CoA hydratase/isomerase family.

Its subcellular location is the mitochondrion. It carries out the reaction 3-hydroxy-2-methylpropanoyl-CoA + H2O = 3-hydroxy-2-methylpropanoate + CoA + H(+). It functions in the pathway amino-acid degradation; L-valine degradation. In terms of biological role, hydrolyzes 3-hydroxyisobutyryl-CoA (HIBYL-CoA), a saline catabolite. Has high activity toward isobutyryl-CoA. Could be an isobutyryl-CoA dehydrogenase that functions in valine catabolism. Also hydrolyzes 3-hydroxypropanoyl-CoA. This is 3-hydroxyisobutyryl-CoA hydrolase, mitochondrial (hibch) from Danio rerio (Zebrafish).